We begin with the raw amino-acid sequence, 769 residues long: Dolichyl-phosphate-mannose--protein mannosyltransferase 2 (769 aa).

The disordered stretch occupies residues methionine 1–threonine 44. The N-linked (GlcNAc...) asparagine glycan is linked to asparagine 8. The helical transmembrane segment at serine 59–valine 79 threads the bilayer. The N-linked (GlcNAc...) asparagine glycan is linked to asparagine 132. 3 helical membrane passes run methionine 152–phenylalanine 169, phenylalanine 176–tyrosine 194, and phenylalanine 200–phenylalanine 218. The N-linked (GlcNAc...) asparagine glycan is linked to asparagine 226. The next 2 helical transmembrane spans lie at valine 252 to tryptophan 272 and histidine 288 to phenylalanine 308. Asparagine 324 carries N-linked (GlcNAc...) asparagine glycosylation. The region spanning proline 342 to alanine 397 is the MIR 1 domain. N-linked (GlcNAc...) asparagine glycosylation is found at asparagine 408, asparagine 453, and asparagine 462. MIR domains lie at isoleucine 412–methionine 468 and glutamate 474–asparagine 534. 4 consecutive transmembrane segments (helical) span residues threonine 615–isoleucine 635, phenylalanine 655–isoleucine 675, valine 679–glutamate 699, and leucine 718–phenylalanine 738.

This sequence belongs to the glycosyltransferase 39 family. In terms of assembly, PMT1 and PMT2 form a functional heterodimer.

Its subcellular location is the endoplasmic reticulum membrane. It carries out the reaction a di-trans,poly-cis-dolichyl beta-D-mannosyl phosphate + L-seryl-[protein] = 3-O-(alpha-D-mannosyl)-L-seryl-[protein] + a di-trans,poly-cis-dolichyl phosphate + H(+). It catalyses the reaction a di-trans,poly-cis-dolichyl beta-D-mannosyl phosphate + L-threonyl-[protein] = 3-O-(alpha-D-mannosyl)-L-threonyl-[protein] + a di-trans,poly-cis-dolichyl phosphate + H(+). It participates in protein modification; protein glycosylation. Protein mannosyltransferase (PMT) involved in hyphal growth and drug sensitivity. Transfers mannose from Dol-P-mannose to Ser or Thr residues on proteins. PMT1, PMT2 and PMT4 account for most of the protein-O-glycosylation activity, while PMT5 and PMT6 may specifically modulate a much narrower spectrum of target proteins. Essential protein that plays an important role in virulence. The sequence is that of Dolichyl-phosphate-mannose--protein mannosyltransferase 2 from Candida albicans (strain SC5314 / ATCC MYA-2876) (Yeast).